We begin with the raw amino-acid sequence, 40 residues long: Cytolysin SmT-1 (40 aa).

A plays an important role in the hemolytic activity region spans residues 3-12 (ALAGTIIAGA). Residues 11 to 30 (GASLGFQILDKVLGELGKVS) are N-terminal region.

The protein belongs to the actinoporin family. Sea anemone subfamily. As to quaternary structure, octamer or nonamer in membranes. Monomer in the soluble state.

Its subcellular location is the secreted. The protein localises to the nematocyst. It localises to the target cell membrane. Functionally, pore-forming protein that forms cations-selective hydrophilic pores of around 1 nm and causes cardiac stimulation and cytolysis. Pore formation is a multi-step process that involves specific recognition of membrane sphingomyelin (but neither cholesterol nor phosphatidylcholine) using aromatic rich region and adjacent phosphocholine (POC) binding site, firm binding to the membrane (mainly driven by hydrophobic interactions) accompanied by the transfer of the N-terminal region to the lipid-water interface and finally pore formation after oligomerization of monomers. This toxin shows hemolytic activities. The polypeptide is Cytolysin SmT-1 (Stichodactyla mertensii (Merten's carpet sea anemone)).